The sequence spans 485 residues: Cysteine--tRNA ligase (485 aa).

Cysteine 27 is a binding site for Zn(2+). The 'HIGH' region signature appears at 29–39; that stretch reads ITAYDLCHLGH. 3 residues coordinate Zn(2+): cysteine 208, histidine 233, and glutamate 237. A 'KMSKS' region motif is present at residues 265–269; that stretch reads KMSKS. Lysine 268 serves as a coordination point for ATP.

This sequence belongs to the class-I aminoacyl-tRNA synthetase family. Monomer. Zn(2+) is required as a cofactor.

It is found in the cytoplasm. It carries out the reaction tRNA(Cys) + L-cysteine + ATP = L-cysteinyl-tRNA(Cys) + AMP + diphosphate. This Oleidesulfovibrio alaskensis (strain ATCC BAA-1058 / DSM 17464 / G20) (Desulfovibrio alaskensis) protein is Cysteine--tRNA ligase.